The chain runs to 81 residues: MQPSQIIAIAALVVAAIIAIVVWTIVFIEYRRIKRQRKIDCIIDRIRERAEDSGNESEGDREELSKLVEMGHHAPWDIDDL.

Over 1–7 the chain is Extracellular; that stretch reads MQPSQII. The chain crosses the membrane as a helical span at residues 8-28; the sequence is AIAALVVAAIIAIVVWTIVFI. The Cytoplasmic segment spans residues 29-81; the sequence is EYRRIKRQRKIDCIIDRIRERAEDSGNESEGDREELSKLVEMGHHAPWDIDDL. S53 and S57 each carry phosphoserine; by host CK2.

Belongs to the HIV-1 VPU protein family. In terms of assembly, homopentamer. Interacts with host CD4 and BRTC; these interactions induce proteasomal degradation of CD4. Interacts with host BST2; this interaction leads to the degradation of host BST2. Interacts with host FBXW11. Interacts with host AP1M1; this interaction plays a role in the mistrafficking and subsequent degradation of host BST2. Interacts with host RANBP2; this interaction allows Vpu to down-regulate host BLM sumoylation. In terms of processing, phosphorylated by host CK2. This phosphorylation is necessary for interaction with human BTRC and degradation of CD4.

The protein localises to the host membrane. Its activity is regulated as follows. Ion channel activity is inhibited by hexamethylene amiloride in vitro. Functionally, enhances virion budding by targeting host CD4 and Tetherin/BST2 to proteasome degradation. Degradation of CD4 prevents any unwanted premature interactions between viral Env and its host receptor CD4 in the endoplasmic reticulum. Degradation of antiretroviral protein Tetherin/BST2 is important for virion budding, as BST2 tethers new viral particles to the host cell membrane. Mechanistically, Vpu bridges either CD4 or BST2 to BTRC, a substrate recognition subunit of the Skp1/Cullin/F-box protein E3 ubiquitin ligase, induces their ubiquitination and subsequent proteasomal degradation. The alteration of the E3 ligase specificity by Vpu seems to promote the degradation of host IKBKB, leading to NF-kappa-B down-regulation and subsequent apoptosis. Acts as a viroporin that forms an oligomeric ion channel in membranes. Modulates the host DNA repair mechanisms to promote degradation of nuclear viral cDNA in cells that are already productively infected in order to suppress immune sensing and proviral hyper-integration (superinfection). Manipulates PML-NBs and modulates SUMOylation of host BLM protein thereby enhancing its DNA-end processing activity toward viral unintegrated linear DNA. Also inhibits RAD52-mediated homologous repair of viral cDNA, preventing the generation of dead-end circular forms of single copies of the long terminal repeat and permitting sustained nucleolytic attack. In Homo sapiens (Human), this protein is Protein Vpu.